Here is a 161-residue protein sequence, read N- to C-terminus: Dihydrofolate reductase (161 aa).

Residues 2–157 (TLSIIVAHDK…IPHTFLHLVR (156 aa)) form the DHFR domain. 6-8 (IVA) is a substrate binding site. NADP(+) is bound by residues 7-8 (VA) and 15-20 (IGYQNQ). Position 28 (D28) interacts with substrate. 44 to 47 (GRKT) provides a ligand contact to NADP(+). Residue R58 coordinates substrate. Residues 63-66 (LTNQ) and 93-98 (FGGQTL) each bind NADP(+). Position 112 (T112) interacts with substrate.

The protein belongs to the dihydrofolate reductase family.

The enzyme catalyses (6S)-5,6,7,8-tetrahydrofolate + NADP(+) = 7,8-dihydrofolate + NADPH + H(+). The protein operates within cofactor biosynthesis; tetrahydrofolate biosynthesis; 5,6,7,8-tetrahydrofolate from 7,8-dihydrofolate: step 1/1. In terms of biological role, key enzyme in folate metabolism. Catalyzes an essential reaction for de novo glycine and purine synthesis, and for DNA precursor synthesis. In Staphylococcus epidermidis, this protein is Dihydrofolate reductase (folA).